The chain runs to 147 residues: Phage-like element PBSX protein XkdM (147 aa).

To B.subtilis YqbM.

The protein is Phage-like element PBSX protein XkdM (xkdM) of Bacillus subtilis (strain 168).